Reading from the N-terminus, the 147-residue chain is MNPAHLLVLAAVCVSLLGAAIVPPQPLNLYQFNNMIQCANHGNRPTWHYAHYGCYCGKGGGGTAVDELDRCCQTHDNCYGEAEKLPKCSPYYKTYKYDCSEGKLTCKDAPGSCERSVCDCDRVAANCFAGAPYNNDNFFISFKENCQ.

The signal sequence occupies residues Met-1–Ala-19. The propeptide occupies Ala-20 to Leu-27. Cystine bridges form between Cys-38–Cys-99, Cys-54–Cys-146, Cys-56–Cys-72, Cys-71–Cys-127, Cys-78–Cys-120, Cys-88–Cys-113, and Cys-106–Cys-118. Ca(2+)-binding residues include Tyr-55, Gly-57, and Gly-59. His-75 is a catalytic residue. Position 76 (Asp-76) interacts with Ca(2+). The active site involves Asp-121.

Belongs to the phospholipase A2 family. Group I subfamily. D49 sub-subfamily. Ca(2+) is required as a cofactor. In terms of tissue distribution, expressed by the venom gland.

Its subcellular location is the secreted. It carries out the reaction a 1,2-diacyl-sn-glycero-3-phosphocholine + H2O = a 1-acyl-sn-glycero-3-phosphocholine + a fatty acid + H(+). PLA2 catalyzes the calcium-dependent hydrolysis of the 2-acyl groups in 3-sn-phosphoglycerides. This is Acidic phospholipase A2 1 from Bungarus flaviceps flaviceps (Red-headed krait).